The sequence spans 292 residues: tRNA-cytidine(32) 2-sulfurtransferase (292 aa).

Residues 54 to 59 (SGGKDS) carry the PP-loop motif motif. [4Fe-4S] cluster is bound by residues Cys-129, Cys-132, and Cys-220.

The protein belongs to the TtcA family. As to quaternary structure, homodimer. Mg(2+) is required as a cofactor. The cofactor is [4Fe-4S] cluster.

It localises to the cytoplasm. The catalysed reaction is cytidine(32) in tRNA + S-sulfanyl-L-cysteinyl-[cysteine desulfurase] + AH2 + ATP = 2-thiocytidine(32) in tRNA + L-cysteinyl-[cysteine desulfurase] + A + AMP + diphosphate + H(+). It participates in tRNA modification. In terms of biological role, catalyzes the ATP-dependent 2-thiolation of cytidine in position 32 of tRNA, to form 2-thiocytidine (s(2)C32). The sulfur atoms are provided by the cysteine/cysteine desulfurase (IscS) system. This is tRNA-cytidine(32) 2-sulfurtransferase from Cereibacter sphaeroides (strain ATCC 17025 / ATH 2.4.3) (Rhodobacter sphaeroides).